A 430-amino-acid chain; its full sequence is Glutamyl-tRNA reductase (430 aa).

Residues threonine 49–arginine 52, serine 109, glutamate 114–glutamine 116, and glutamine 120 each bind substrate. Cysteine 50 (nucleophile) is an active-site residue. Glycine 189–alanine 194 is a binding site for NADP(+).

It belongs to the glutamyl-tRNA reductase family. As to quaternary structure, homodimer.

It catalyses the reaction (S)-4-amino-5-oxopentanoate + tRNA(Glu) + NADP(+) = L-glutamyl-tRNA(Glu) + NADPH + H(+). Its pathway is porphyrin-containing compound metabolism; protoporphyrin-IX biosynthesis; 5-aminolevulinate from L-glutamyl-tRNA(Glu): step 1/2. It functions in the pathway porphyrin-containing compound metabolism; chlorophyll biosynthesis. Its function is as follows. Catalyzes the NADPH-dependent reduction of glutamyl-tRNA(Glu) to glutamate 1-semialdehyde (GSA). This chain is Glutamyl-tRNA reductase, found in Crocosphaera subtropica (strain ATCC 51142 / BH68) (Cyanothece sp. (strain ATCC 51142)).